The primary structure comprises 290 residues: 33 kDa chaperonin (290 aa).

2 disulfides stabilise this stretch: cysteine 231-cysteine 233 and cysteine 263-cysteine 266.

The protein belongs to the HSP33 family. Under oxidizing conditions two disulfide bonds are formed involving the reactive cysteines. Under reducing conditions zinc is bound to the reactive cysteines and the protein is inactive.

The protein resides in the cytoplasm. Functionally, redox regulated molecular chaperone. Protects both thermally unfolding and oxidatively damaged proteins from irreversible aggregation. Plays an important role in the bacterial defense system toward oxidative stress. This chain is 33 kDa chaperonin, found in Thermotoga maritima (strain ATCC 43589 / DSM 3109 / JCM 10099 / NBRC 100826 / MSB8).